The following is an 838-amino-acid chain: Translation initiation factor IF-2 (838 aa).

2 disordered regions span residues 30 to 60 (PHTA…KVEE) and 94 to 254 (QRSP…PTGP). 2 stretches are compositionally biased toward basic and acidic residues: residues 33–43 (AAEEHVSDSEK) and 96–136 (SPEE…EARR). The segment covering 137–173 (QPAPVAEPVAAQAAAPAPAPVVEPVQEAPVATAAPAA) has biased composition (low complexity). 2 stretches are compositionally biased toward basic and acidic residues: residues 174–214 (DARK…EKAP) and 222–231 (TTDEESDGFR). Over residues 232-245 (RGGRGKAKLKKRNA) the composition is skewed to basic residues. Positions 338–507 (ARAPVVTVMG…LLQAEVLELK (170 aa)) constitute a tr-type G domain. Positions 347-354 (GHVDHGKT) are G1. 347–354 (GHVDHGKT) contributes to the GTP binding site. A G2 region spans residues 372 to 376 (GITQH). A G3 region spans residues 393–396 (DTPG). GTP-binding positions include 393–397 (DTPGH) and 447–450 (NKID). Residues 447–450 (NKID) form a G4 region. The G5 stretch occupies residues 483-485 (SAK).

It belongs to the TRAFAC class translation factor GTPase superfamily. Classic translation factor GTPase family. IF-2 subfamily.

The protein localises to the cytoplasm. Its function is as follows. One of the essential components for the initiation of protein synthesis. Protects formylmethionyl-tRNA from spontaneous hydrolysis and promotes its binding to the 30S ribosomal subunits. Also involved in the hydrolysis of GTP during the formation of the 70S ribosomal complex. This Pseudomonas fluorescens (strain ATCC BAA-477 / NRRL B-23932 / Pf-5) protein is Translation initiation factor IF-2.